We begin with the raw amino-acid sequence, 523 residues long: Excitatory amino acid transporter 3 (523 aa).

Over 1 to 18 (MGKPTSSGCDWRRFLRNH) the chain is Cytoplasmic. A helical membrane pass occupies residues 19–38 (WLLLSTVAAVVLGIVLGVVV). The Extracellular segment spans residues 39-61 (RGHSELSNLDKFYFAFPGEILMR). A helical membrane pass occupies residues 62-82 (MLKLVILPLIVSSMITGVAAL). The Cytoplasmic portion of the chain corresponds to 83-93 (DSNVSGKIGLR). Residues 94-114 (AVVYYFSTTVIAVILGIVLVV) form a helical membrane-spanning segment. Na(+)-binding residues include Tyr-98, Thr-101, and Thr-102. The Extracellular portion of the chain corresponds to 115 to 204 (SIKPGVTQKV…KTKEYKIVGL (90 aa)). N-linked (GlcNAc...) asparagine glycans are attached at residues Asn-128, Asn-178, and Asn-194. A helical transmembrane segment spans residues 205 to 228 (YSDGINVLGLIIFCLVFGLVIGKM). Residues 229 to 237 (GEKGQILVD) lie on the Cytoplasmic side of the membrane. Residues 238–265 (FFNALSDATMKIVQIIMCYMPIGILFLI) form a helical membrane-spanning segment. Residues 266–285 (AGKIIEVEDWEIFRKLGLYM) are Extracellular-facing. The chain crosses the membrane as a helical span at residues 286-307 (ATVLSGLAIHSLIVLPLLYFIV). The Cytoplasmic segment spans residues 308–312 (VRKNP). An intramembrane region (discontinuously helical) is located at residues 313–343 (FRFALGMAQALLTALMISSSSATLPVTFRCA). L-aspartate contacts are provided by Ser-330 and Ser-332. The Cytoplasmic portion of the chain corresponds to 344 to 352 (EEKNQVDKR). A helical membrane pass occupies residues 353-379 (ITRFVLPVGATINMDGTALYEAVAAVF). Gly-361, Thr-363, Asn-365, and Asp-367 together coordinate Na(+). Thr-369 provides a ligand contact to L-aspartate. Residues 380 to 392 (IAQLNGLDLSIGQ) are Extracellular-facing. An intramembrane region (discontinuously helical) is located at residues 393–426 (IVTISITATAASIGAAGVPQAGLVTMVIVLSAVG). Residues Ser-404, Ile-405, and Ala-407 each contribute to the Na(+) site. Residue Val-410 participates in L-aspartate binding. Residues 427 to 439 (LPAEDVTLIIAVD) are Extracellular-facing. A helical transmembrane segment spans residues 440 to 461 (WLLDRFRTMVNVLGDAFGTGIV). 3 residues coordinate L-aspartate: Arg-446, Thr-447, and Asn-450. Positions 450 and 454 each coordinate Na(+). Topologically, residues 462-523 (EKLSKKELEQ…TISFTQTSQF (62 aa)) are cytoplasmic. A phosphoserine mark is found at Ser-516 and Ser-521.

This sequence belongs to the dicarboxylate/amino acid:cation symporter (DAACS) (TC 2.A.23) family. SLC1A1 subfamily. As to quaternary structure, homotrimer. Interacts with ARL6IP5. Interacts with RTN2 (via N-terminus); the interaction promotes cell surface expression of SLC1A1. Interacts with SORCS2; this interaction is important for normal expression at the cell membrane. Detected on neurons in the brain cortex, dentate gyrus and hippocampus CA2 region (at protein level). Expressed in whole brain, brain cortex, hippocampus, cerebellum, lung, kidney, small intestine and skeletal muscle. Expressed in the renal outer medulla, medullary ray and cortex (at protein level).

Its subcellular location is the cell membrane. It is found in the apical cell membrane. The protein resides in the synapse. It localises to the synaptosome. The protein localises to the early endosome membrane. Its subcellular location is the late endosome membrane. It is found in the recycling endosome membrane. It carries out the reaction K(+)(in) + L-glutamate(out) + 3 Na(+)(out) + H(+)(out) = K(+)(out) + L-glutamate(in) + 3 Na(+)(in) + H(+)(in). The enzyme catalyses K(+)(in) + L-aspartate(out) + 3 Na(+)(out) + H(+)(out) = K(+)(out) + L-aspartate(in) + 3 Na(+)(in) + H(+)(in). It catalyses the reaction D-aspartate(out) + K(+)(in) + 3 Na(+)(out) + H(+)(out) = D-aspartate(in) + K(+)(out) + 3 Na(+)(in) + H(+)(in). The catalysed reaction is K(+)(in) + L-cysteine(out) + 3 Na(+)(out) + H(+)(out) = K(+)(out) + L-cysteine(in) + 3 Na(+)(in) + H(+)(in). In terms of biological role, sodium-dependent, high-affinity amino acid transporter that mediates the uptake of L-glutamate and also L-aspartate and D-aspartate. Can also transport L-cysteine. Functions as a symporter that transports one amino acid molecule together with two or three Na(+) ions and one proton, in parallel with the counter-transport of one K(+) ion. Mediates Cl(-) flux that is not coupled to amino acid transport; this avoids the accumulation of negative charges due to aspartate and Na(+) symport. Plays an important role in L-glutamate and L-aspartate reabsorption in renal tubuli. Plays a redundant role in the rapid removal of released glutamate from the synaptic cleft, which is essential for terminating the postsynaptic action of glutamate. Contributes to glutathione biosynthesis and protection against oxidative stress via its role in L-glutamate and L-cysteine transport. Negatively regulated by ARL6IP5. This is Excitatory amino acid transporter 3 (Slc1a1) from Mus musculus (Mouse).